The primary structure comprises 462 residues: tRNA modification GTPase MnmE (462 aa).

(6S)-5-formyl-5,6,7,8-tetrahydrofolate-binding residues include R27, E89, and R128. Residues 223–383 (GLKIAIVGRP…LEAAILAAVG (161 aa)) enclose the TrmE-type G domain. GTP contacts are provided by residues 233 to 238 (NVGKSS), 252 to 258 (TDLPGRT), and 277 to 280 (DTAG). Positions 237 and 258 each coordinate Mg(2+). Residue K462 coordinates (6S)-5-formyl-5,6,7,8-tetrahydrofolate.

Belongs to the TRAFAC class TrmE-Era-EngA-EngB-Septin-like GTPase superfamily. TrmE GTPase family. As to quaternary structure, homodimer. Heterotetramer of two MnmE and two MnmG subunits. It depends on K(+) as a cofactor.

The protein resides in the cytoplasm. Exhibits a very high intrinsic GTPase hydrolysis rate. Involved in the addition of a carboxymethylaminomethyl (cmnm) group at the wobble position (U34) of certain tRNAs, forming tRNA-cmnm(5)s(2)U34. This chain is tRNA modification GTPase MnmE, found in Synechococcus sp. (strain ATCC 27144 / PCC 6301 / SAUG 1402/1) (Anacystis nidulans).